Here is a 382-residue protein sequence, read N- to C-terminus: Rubredoxin-NAD(+) reductase (382 aa).

FAD-binding positions include 9–12 (TGLA), 33–34 (TA), Lys-42, Val-80, Glu-156, Asp-275, Val-287, and Lys-318.

Belongs to the FAD-dependent oxidoreductase family. Homodimer. Requires FAD as cofactor.

It localises to the cytoplasm. The enzyme catalyses 2 reduced [rubredoxin] + NAD(+) + H(+) = 2 oxidized [rubredoxin] + NADH. It participates in hydrocarbon metabolism; alkane degradation. In terms of biological role, involved in the hydrocarbon hydroxylating system, which transfers electrons from NADH to rubredoxin reductase and then through rubredoxin to alkane 1 monooxygenase. This is Rubredoxin-NAD(+) reductase (rubB) from Alcanivorax borkumensis (strain ATCC 700651 / DSM 11573 / NCIMB 13689 / SK2).